The following is a 160-amino-acid chain: Transcriptional repressor NrdR (160 aa).

A zinc finger spans residues 3-34; it reads CPFCGHADTQVVDSRVSEEGDTIRRRRRCLSC. The ATP-cone domain occupies 49-139; it reads PTVVKRDGSR…VYKSFEDIGE (91 aa).

This sequence belongs to the NrdR family. Zn(2+) is required as a cofactor.

Functionally, negatively regulates transcription of bacterial ribonucleotide reductase nrd genes and operons by binding to NrdR-boxes. The protein is Transcriptional repressor NrdR of Bordetella avium (strain 197N).